The chain runs to 591 residues: Oligopeptide-binding protein OppA (591 aa).

This sequence belongs to the bacterial solute-binding protein 5 family. In terms of assembly, the complex is composed of an ATP-binding protein (OppD), two transmembrane proteins (OppB and OppC) and a solute-binding protein (OppA).

The protein resides in the periplasm. Functionally, part of the ABC transporter complex OppABCD involved in the uptake of oligopeptides. Peptide-binding protein that shows broad specificity but a moderate preference for hydrophobic oligopeptides and those that are 6-16 amino acids long. This Mycobacterium bovis (strain ATCC BAA-935 / AF2122/97) protein is Oligopeptide-binding protein OppA.